The primary structure comprises 760 residues: General transcription and DNA repair factor IIH helicase subunit XPD (760 aa).

One can recognise a Helicase ATP-binding domain in the interval 7–283; the sequence is GLLVYFPYDY…KETDEQRLRD (277 aa). 42-49 contacts ATP; sequence MPSGTGKT. [4Fe-4S] cluster is bound by residues C116, C134, C155, and C190. Positions 234–237 match the DEAH box motif; the sequence is DEAH. The tract at residues 438–637 is mediates interaction with MMS19; the sequence is MDASLAIKPV…TQSRILKARL (200 aa). A Nuclear localization signal motif is present at residues 682–695; the sequence is KRFARADKRGKLPR.

This sequence belongs to the helicase family. RAD3/XPD subfamily. As to quaternary structure, component of the 7-subunit TFIIH core complex composed of XPB/ERCC3, XPD/ERCC2, GTF2H1, GTF2H2, GTF2H3, GTF2H4 and GTF2H5, which is active in NER. The core complex associates with the 3-subunit CDK-activating kinase (CAK) module composed of CCNH/cyclin H, CDK7 and MNAT1 to form the 10-subunit holoenzyme (holo-TFIIH) active in transcription. The interaction with GTF2H2 results in the stimulation of the 5'--&gt;3' helicase activity. Component of the MMXD complex, which includes CIAO1, ERCC2, CIAO2B, MMS19 and SLC25A5. Interacts with CIAO1 and CIAO2B; the interaction WITH CIAO2B is direct. Interacts with ATF7IP. Interacts directly with MMS19. Part of TBP-based Pol II pre-initiation complex (PIC), in which Pol II core assembles with general transcription factors and other specific initiation factors including GTF2E1, GTF2E2, GTF2F1, GTF2F2, TCEA1, ERCC2, ERCC3, GTF2H2, GTF2H3, GTF2H4, GTF2H5, GTF2A1, GTF2A2, GTF2B and TBP; this large multi-subunit PIC complex mediates DNA unwinding and targets Pol II core to the transcription start site where the first phosphodiester bond forms. Requires Mg(2+) as cofactor. It depends on [4Fe-4S] cluster as a cofactor. ISGylated.

The protein localises to the nucleus. Its subcellular location is the cytoplasm. It localises to the cytoskeleton. It is found in the spindle. It catalyses the reaction Couples ATP hydrolysis with the unwinding of duplex DNA at the replication fork by translocating in the 5'-3' direction. This creates two antiparallel DNA single strands (ssDNA). The leading ssDNA polymer is the template for DNA polymerase III holoenzyme which synthesizes a continuous strand.. The catalysed reaction is ATP + H2O = ADP + phosphate + H(+). ATP-dependent 5'-3' DNA helicase. Component of the general transcription and DNA repair factor IIH (TFIIH) core complex which is involved in general and transcription-coupled nucleotide excision repair (NER) of damaged DNA. When complexed to CDK-activating kinase (CAK), involved in transcription by RNA polymerase II. In NER, TFIIH acts by opening DNA around the lesion to allow the excision of the damaged oligonucleotide and its replacement by a new DNA fragment. The ATP-dependent helicase activity of XPD/ERCC2 is required for DNA opening. In transcription, TFIIH has an essential role in transcription initiation. When the pre-initiation complex (PIC) has been established, TFIIH is required for promoter opening and promoter escape. Phosphorylation of the C-terminal tail (CTD) of the largest subunit of RNA polymerase II by the kinase module CAK controls the initiation of transcription. XPD/ERCC2 acts by forming a bridge between CAK and the core-TFIIH complex. Involved in the regulation of vitamin-D receptor activity. As part of the mitotic spindle-associated MMXD complex it plays a role in chromosome segregation. Might have a role in aging process and could play a causative role in the generation of skin cancers. The sequence is that of General transcription and DNA repair factor IIH helicase subunit XPD from Cricetulus griseus (Chinese hamster).